A 159-amino-acid chain; its full sequence is Major allergen Mal d 1 (159 aa).

This sequence belongs to the BetVI family.

This chain is Major allergen Mal d 1, found in Malus domestica (Apple).